The following is a 295-amino-acid chain: Ribosomal protein L11 methyltransferase (295 aa).

The S-adenosyl-L-methionine site is built by T150, G171, D193, and N232.

The protein belongs to the methyltransferase superfamily. PrmA family.

It localises to the cytoplasm. It carries out the reaction L-lysyl-[protein] + 3 S-adenosyl-L-methionine = N(6),N(6),N(6)-trimethyl-L-lysyl-[protein] + 3 S-adenosyl-L-homocysteine + 3 H(+). Methylates ribosomal protein L11. This is Ribosomal protein L11 methyltransferase from Neisseria gonorrhoeae (strain ATCC 700825 / FA 1090).